Here is a 216-residue protein sequence, read N- to C-terminus: Large ribosomal subunit protein uL3 (216 aa).

Gln157 is modified (N5-methylglutamine).

Belongs to the universal ribosomal protein uL3 family. Part of the 50S ribosomal subunit. Forms a cluster with proteins L14 and L19. Methylated by PrmB.

In terms of biological role, one of the primary rRNA binding proteins, it binds directly near the 3'-end of the 23S rRNA, where it nucleates assembly of the 50S subunit. The protein is Large ribosomal subunit protein uL3 of Xanthomonas oryzae pv. oryzae (strain MAFF 311018).